A 311-amino-acid polypeptide reads, in one-letter code: Ribosomal RNA small subunit methyltransferase H (311 aa).

S-adenosyl-L-methionine-binding positions include 41-43 (GGH), Asp-61, Phe-85, Asp-102, and Gln-109.

This sequence belongs to the methyltransferase superfamily. RsmH family.

The protein resides in the cytoplasm. It carries out the reaction cytidine(1402) in 16S rRNA + S-adenosyl-L-methionine = N(4)-methylcytidine(1402) in 16S rRNA + S-adenosyl-L-homocysteine + H(+). Specifically methylates the N4 position of cytidine in position 1402 (C1402) of 16S rRNA. This chain is Ribosomal RNA small subunit methyltransferase H, found in Paracidovorax citrulli (strain AAC00-1) (Acidovorax citrulli).